A 180-amino-acid chain; its full sequence is ATP-dependent protease subunit HslV (180 aa).

Thr7 is a catalytic residue. Na(+) is bound by residues Gly165, Cys168, and Thr171.

It belongs to the peptidase T1B family. HslV subfamily. In terms of assembly, a double ring-shaped homohexamer of HslV is capped on each side by a ring-shaped HslU homohexamer. The assembly of the HslU/HslV complex is dependent on binding of ATP.

The protein resides in the cytoplasm. The catalysed reaction is ATP-dependent cleavage of peptide bonds with broad specificity.. Allosterically activated by HslU binding. Protease subunit of a proteasome-like degradation complex believed to be a general protein degrading machinery. This Bacillus anthracis (strain A0248) protein is ATP-dependent protease subunit HslV.